We begin with the raw amino-acid sequence, 204 residues long: Ribosome maturation factor RimP (204 aa).

The segment at 177–204 is disordered; sequence NFDESQFDEIQETEGEEADEAETPITRH. Acidic residues predominate over residues 181-198; the sequence is SQFDEIQETEGEEADEAE.

Belongs to the RimP family.

The protein resides in the cytoplasm. Required for maturation of 30S ribosomal subunits. This chain is Ribosome maturation factor RimP, found in Cereibacter sphaeroides (strain ATCC 17025 / ATH 2.4.3) (Rhodobacter sphaeroides).